The chain runs to 980 residues: Envelope glycoprotein B (980 aa).

Positions 1-14 (MSSGCRSVGGSTWG) are enriched in polar residues. Disordered stretches follow at residues 1-20 (MSSG…RGDG) and 88-118 (TTPS…TETP). The N-terminal stretch at 1–86 (MSSGCRSVGG…LFGSCVVRAV (86 aa)) is a signal peptide. Topologically, residues 87–849 (PTTPSPPTST…SGIASFLNNP (763 aa)) are virion surface. A compositionally biased stretch (low complexity) spans 96-118 (TPTSMSTHSHGTVDPTLLPTETP). Cystine bridges form between Cys-140/Cys-647, Cys-157/Cys-603, Cys-231/Cys-296, Cys-389/Cys-437, and Cys-668/Cys-708. The N-linked (GlcNAc...) asparagine; by host glycan is linked to Asn-165. The segment at 197 to 203 (VWKGYSH) is involved in fusion and/or binding to host membrane. The N-linked (GlcNAc...) asparagine; by host glycan is linked to Asn-275. Residues 282-290 (GWMPWRHYT) form an involved in fusion and/or binding to host membrane region. N-linked (GlcNAc...) asparagine; by host glycosylation is found at Asn-380, Asn-423, Asn-497, Asn-514, Asn-515, and Asn-560. The segment covering 505 to 516 (LLNPNANNNNNT) has biased composition (low complexity). Residues 505 to 535 (LLNPNANNNNNTTRRRRSLLSVPEPQPTQDG) form a disordered region. Asn-727 and Asn-749 each carry an N-linked (GlcNAc...) asparagine; by host glycan. Hydrophobic membrane proximal region stretches follow at residues 794 to 847 (IDSV…SFLN) and 823 to 843 (AVGT…SGIA). Residues 850–870 (FGGLAIGLLVIAGLVAAFFAY) form a helical membrane-spanning segment. Residues 871 to 980 (RYVMQIRSNP…NDTMENEKMV (110 aa)) lie on the Intravirion side of the membrane. Residues 925–928 (YMSM) carry the Golgi targeting motif. The Internalization motif motif lies at 965 to 968 (YTRL).

It belongs to the herpesviridae glycoprotein B family. Homotrimer; disulfide-linked. Binds to heparan sulfate proteoglycans. Interacts with gH/gL heterodimer. Post-translationally, a proteolytic cleavage by host furin generates two subunits that remain linked by disulfide bonds.

Its subcellular location is the virion membrane. It localises to the host cell membrane. It is found in the host endosome membrane. The protein resides in the host Golgi apparatus membrane. Its function is as follows. Envelope glycoprotein that forms spikes at the surface of virion envelope. Essential for the initial attachment to heparan sulfate moieties of the host cell surface proteoglycans. Involved in fusion of viral and cellular membranes leading to virus entry into the host cell. Following initial binding to its host receptors, membrane fusion is mediated by the fusion machinery composed at least of gB and the heterodimer gH/gL. May be involved in the fusion between the virion envelope and the outer nuclear membrane during virion egress. In Equine herpesvirus 1 (strain AB1) (EHV-1), this protein is Envelope glycoprotein B.